The chain runs to 683 residues: E3 ubiquitin-protein ligase WAVH1 (683 aa).

The RING-type; atypical zinc-finger motif lies at 130–176 (CGICLQSVKSGQGTAIFTAECSHTFHFPCVTSRAAANHNRLASCPVC). The VWFA domain maps to 302–438 (DLVAVLDVSG…AHSRIPIHTI (137 aa)).

In terms of tissue distribution, expressed in root tips and leaf primordia.

It carries out the reaction S-ubiquitinyl-[E2 ubiquitin-conjugating enzyme]-L-cysteine + [acceptor protein]-L-lysine = [E2 ubiquitin-conjugating enzyme]-L-cysteine + N(6)-ubiquitinyl-[acceptor protein]-L-lysine.. Its function is as follows. E3 ubiquitin-protein ligase involved in the regulation of root growth. Acts as a positive regulator of root gravitropism. Possesses E3 protein ligase activity in vitro. The polypeptide is E3 ubiquitin-protein ligase WAVH1 (Arabidopsis thaliana (Mouse-ear cress)).